Reading from the N-terminus, the 151-residue chain is Ubiquitin-conjugating enzyme E2-17 kDa (151 aa).

Positions 4-150 constitute a UBC core domain; it reads PARRRLMRDF…VKACVEQSFI (147 aa). The active-site Glycyl thioester intermediate is the Cys-88.

The protein belongs to the ubiquitin-conjugating enzyme family.

The protein localises to the nucleus. The enzyme catalyses S-ubiquitinyl-[E1 ubiquitin-activating enzyme]-L-cysteine + [E2 ubiquitin-conjugating enzyme]-L-cysteine = [E1 ubiquitin-activating enzyme]-L-cysteine + S-ubiquitinyl-[E2 ubiquitin-conjugating enzyme]-L-cysteine.. The protein operates within protein modification; protein ubiquitination. Its function is as follows. E2 ubiquitin-conjugating enzyme that accepts ubiquitin from the ubiquitin-activating enzyme E1 and transfers it to a E3 ubiquitin-protein ligase. Required for postreplication repair of UV-damaged DNA. Involved in the negative regulation of the Ras/MAPK signaling pathway in the wing by acting with the putative E3 ligases poe, Kcmf1 and Ufd4 to mediate the ubiquitination and proteasomal degradation of rl/MAPK. Required for in mitophagy. The sequence is that of Ubiquitin-conjugating enzyme E2-17 kDa from Drosophila melanogaster (Fruit fly).